Here is a 399-residue protein sequence, read N- to C-terminus: Glutamyl-tRNA reductase (399 aa).

Substrate is bound by residues 45–48 (TCNR), Ser-93, 98–100 (EDQ), and Gln-104. The Nucleophile role is filled by Cys-46. Residue 173–178 (GAGKMG) coordinates NADP(+).

The protein belongs to the glutamyl-tRNA reductase family. In terms of assembly, homodimer.

It carries out the reaction (S)-4-amino-5-oxopentanoate + tRNA(Glu) + NADP(+) = L-glutamyl-tRNA(Glu) + NADPH + H(+). The protein operates within porphyrin-containing compound metabolism; protoporphyrin-IX biosynthesis; 5-aminolevulinate from L-glutamyl-tRNA(Glu): step 1/2. Its function is as follows. Catalyzes the NADPH-dependent reduction of glutamyl-tRNA(Glu) to glutamate 1-semialdehyde (GSA). This chain is Glutamyl-tRNA reductase, found in Methanobrevibacter smithii (strain ATCC 35061 / DSM 861 / OCM 144 / PS).